The sequence spans 495 residues: F(420)H(2) dehydrogenase subunit M (495 aa).

Transmembrane regions (helical) follow at residues 1–21, 27–47, 57–77, 80–100, 108–128, 130–150, 163–183, 215–235, 249–269, 277–297, 315–335, 338–358, 378–398, 412–432, and 450–470; these read MLPV…VTFF, LAAG…LYAY, MQFY…SVGI, VSMP…LFTW, NRFY…FVAL, FVVF…IVNL, FFIY…GLFY, IFLA…FHSW, ILFI…LPML, LMIM…ALLA, MGYV…GAMF, FSHG…QTAA, VAMM…GFIA, VFVV…LWAM, and INSI…YFGL.

The protein belongs to the complex I subunit 4 family. The FPO complex is composed of at least 13 different subunits. FpoA, FpoH, FpoJ, FpoK, FpoL, FpoM and FpoN proteins constitute the membrane sector of the complex.

It localises to the cell membrane. The catalysed reaction is methanophenazine + reduced coenzyme F420-(gamma-L-Glu)(n) = dihydromethanophenazine + oxidized coenzyme F420-(gamma-L-Glu)(n) + H(+). Functionally, component of the F(420)H(2) dehydrogenase (FPO complex) which is part of the energy-conserving F(420)H(2):heterodisulfide oxidoreductase system. The membrane-bound electron transfer system of the complex plays an important role in the metabolism of methylotrophic methanogens when the organisms grow on methanol or methylamines. Catalyzes the oxidation of methanophenazine to dihydromethanophenazine. It shuttles electrons from F(420)H(2), via FAD and iron-sulfur (Fe-S) centers, to methanophenazine (an electron carrier in the membrane). It couples the redox reaction to proton translocation (for every two electrons transferred, two hydrogen ions are translocated across the cytoplasmic membrane), and thus conserves the redox energy in a proton gradient. It also catalyzes the oxidation of F(420)H(2) with quinones such as 2,3-dimethyl-1,4-naphthoquinone, 2-methyl-1,4-naphthoquinone and tetramethyl-p-benzoquinone. This Methanosarcina mazei (strain ATCC BAA-159 / DSM 3647 / Goe1 / Go1 / JCM 11833 / OCM 88) (Methanosarcina frisia) protein is F(420)H(2) dehydrogenase subunit M (fpoM).